Consider the following 277-residue polypeptide: Large ribosomal subunit protein uL2 (277 aa).

The interval 219 to 277 (TVRGSVMNPNDHPHGGGEGKAPVGRKAPSTPWGKPALGLKTRNKKAKSDKLIVRRRNEK) is disordered. Over residues 264–277 (AKSDKLIVRRRNEK) the composition is skewed to basic and acidic residues.

Belongs to the universal ribosomal protein uL2 family. As to quaternary structure, part of the 50S ribosomal subunit. Forms a bridge to the 30S subunit in the 70S ribosome.

Its function is as follows. One of the primary rRNA binding proteins. Required for association of the 30S and 50S subunits to form the 70S ribosome, for tRNA binding and peptide bond formation. It has been suggested to have peptidyltransferase activity; this is somewhat controversial. Makes several contacts with the 16S rRNA in the 70S ribosome. This chain is Large ribosomal subunit protein uL2, found in Streptococcus pyogenes serotype M1.